The sequence spans 133 residues: Small ribosomal subunit protein bS6 (133 aa).

Belongs to the bacterial ribosomal protein bS6 family.

Binds together with bS18 to 16S ribosomal RNA. This chain is Small ribosomal subunit protein bS6, found in Chlorobium phaeovibrioides (strain DSM 265 / 1930) (Prosthecochloris vibrioformis (strain DSM 265)).